A 258-amino-acid polypeptide reads, in one-letter code: uncharacterized protein (258 aa).

This is an uncharacterized protein from Caenorhabditis elegans.